An 850-amino-acid polypeptide reads, in one-letter code: Ras GTPase-activating protein 2 (850 aa).

Residues 1 to 24 (MAAAAPAAAAASSEAPAASATAEP) show a composition bias toward low complexity. The segment at 1–32 (MAAAAPAAAAASSEAPAASATAEPEAGDQDSR) is disordered. The residue at position 2 (Ala2) is an N-acetylalanine. 2 consecutive C2 domains span residues 20-138 (ATAE…ETWF) and 149-289 (VQGK…QAWY). A Ras-GAP domain is found at 372-589 (DKLVPFATAV…IAVKKFLDEI (218 aa)). Ser555 is subject to Phosphoserine. A PH domain is found at 604–706 (VHLKEGEMYK…WIDVLCRVSR (103 aa)). The Btk-type zinc-finger motif lies at 708-744 (NQNRLSFYHPSVYLNGNWLCCQETGENTLGCKPCTAG). His716, Cys727, Cys728, and Cys738 together coordinate Zn(2+). The interval 825 to 850 (HEKYRKKRSSSAKYGSKENPIVGKAS) is disordered.

It is found in the cytoplasm. Its subcellular location is the perinuclear region. Inhibitory regulator of the Ras-cyclic AMP pathway. Binds inositol tetrakisphosphate (IP4). This chain is Ras GTPase-activating protein 2 (RASA2), found in Homo sapiens (Human).